The following is a 373-amino-acid chain: 3 beta-hydroxysteroid dehydrogenase/Delta 5--&gt;4-isomerase type 1 (373 aa).

Residues 10 to 15 (GAGGFV), Y155, and K159 contribute to the NADP(+) site. K159 functions as the Proton donor in the catalytic mechanism. The helical transmembrane segment at 288 to 308 (LPLLYWLAFLLETVSFLLRPF) threads the bilayer.

It belongs to the 3-beta-HSD family. As to expression, adrenal glands, kidney, testes and ovaries.

Its subcellular location is the endoplasmic reticulum membrane. The protein localises to the mitochondrion membrane. The enzyme catalyses a 3beta-hydroxy-Delta(5)-steroid + NAD(+) = a 3-oxo-Delta(5)-steroid + NADH + H(+). It carries out the reaction pregnenolone + NAD(+) = pregn-5-ene-3,20-dione + NADH + H(+). The catalysed reaction is 3beta-hydroxyandrost-5-en-17-one + NAD(+) = androst-5-ene-3,17-dione + NADH + H(+). It catalyses the reaction androst-5-en-3beta,17beta-diol + NAD(+) = 17beta-hydroxy-androst-5-en-3-one + NADH + H(+). The enzyme catalyses a 3beta-hydroxysteroid + NADP(+) = a 3-oxosteroid + NADPH + H(+). It carries out the reaction 5alpha-androstane-3beta,17beta-diol + NADP(+) = 17beta-hydroxy-5alpha-androstan-3-one + NADPH + H(+). The catalysed reaction is 3beta-hydroxy-5alpha-androstan-17-one + NADP(+) = 5alpha-androstan-3,17-dione + NADPH + H(+). It catalyses the reaction a 3-oxo-Delta(5)-steroid = a 3-oxo-Delta(4)-steroid. The enzyme catalyses pregn-5-ene-3,20-dione = progesterone. It carries out the reaction androst-5-ene-3,17-dione = androst-4-ene-3,17-dione. The catalysed reaction is 17beta-hydroxy-androst-5-en-3-one = testosterone. It catalyses the reaction 5alpha-androstane-3beta,17beta-diol + NAD(+) = 17beta-hydroxy-5alpha-androstan-3-one + NADH + H(+). It participates in steroid hormone biosynthesis. It functions in the pathway steroid metabolism. In terms of biological role, a bifunctional enzyme responsible for the oxidation and isomerization of 3beta-hydroxy-Delta(5)-steroid precursors to 3-oxo-Delta(4)-steroids, an essential step in steroid hormone biosynthesis. Specifically catalyzes the conversion of pregnenolone to progesterone, dehydroepiandrosterone (DHEA) to 4-androstenedione, and androstenediol to testosterone. Additionally, catalyzes the interconversion between 3beta-hydroxy and 3-oxo-5alpha-androstane steroids controlling the bioavalability of the active forms. Specifically converts dihydrotestosterone to its inactive form 5alpha-androstanediol, that does not bind androgen receptor/AR. Also converts androstanedione, a precursor of testosterone and estrone, to epiandrosterone. Expected to use NAD(+) as preferred electron donor for the 3beta-hydroxy-steroid dehydrogenase activity and NADPH for the 3-ketosteroid reductase activity. This Rattus norvegicus (Rat) protein is 3 beta-hydroxysteroid dehydrogenase/Delta 5--&gt;4-isomerase type 1.